Reading from the N-terminus, the 105-residue chain is Large ribosomal subunit protein uL24 (105 aa).

It belongs to the universal ribosomal protein uL24 family. As to quaternary structure, part of the 50S ribosomal subunit.

In terms of biological role, one of two assembly initiator proteins, it binds directly to the 5'-end of the 23S rRNA, where it nucleates assembly of the 50S subunit. Its function is as follows. One of the proteins that surrounds the polypeptide exit tunnel on the outside of the subunit. This chain is Large ribosomal subunit protein uL24, found in Clostridium botulinum (strain ATCC 19397 / Type A).